Reading from the N-terminus, the 257-residue chain is MLPSDLVNYKKKSRKIIALTAWDSISGSIAEQANVDLVLVGDSLAMVCLGYKSTLPLTLENIIYHTNAVSRGFKKKIEEQPLVVSDMPFLTYQCGEDKAVEYAGKIIQSTYAKAVKVEGAEPEIQKVISRLIRMGIPVMGHIGLTPQSYLNIGLRKQGESLASQEKIKKEASILEELGCFSIVLEHIPDLLAKEIKNSLTIPIIGIGAGNYCDGQVRVTADLLGLNDDQPPFCQPIIQGKKLFKDKLKEWVDSERLN.

Mg(2+) is bound by residues Asp-42 and Asp-86. 3-methyl-2-oxobutanoate is bound by residues Asp-42 to Ser-43, Asp-86, and Lys-116. Glu-118 serves as a coordination point for Mg(2+). Glu-185 functions as the Proton acceptor in the catalytic mechanism.

It belongs to the PanB family. In terms of assembly, homodecamer; pentamer of dimers. Requires Mg(2+) as cofactor.

The protein localises to the cytoplasm. The enzyme catalyses 3-methyl-2-oxobutanoate + (6R)-5,10-methylene-5,6,7,8-tetrahydrofolate + H2O = 2-dehydropantoate + (6S)-5,6,7,8-tetrahydrofolate. It participates in cofactor biosynthesis; (R)-pantothenate biosynthesis; (R)-pantoate from 3-methyl-2-oxobutanoate: step 1/2. Catalyzes the reversible reaction in which hydroxymethyl group from 5,10-methylenetetrahydrofolate is transferred onto alpha-ketoisovalerate to form ketopantoate. In Prochlorococcus marinus (strain AS9601), this protein is 3-methyl-2-oxobutanoate hydroxymethyltransferase.